The chain runs to 342 residues: tRNA N6-adenosine threonylcarbamoyltransferase (342 aa).

Fe cation contacts are provided by histidine 114 and histidine 118. Substrate-binding positions include 136–140, aspartate 169, glycine 182, aspartate 186, and asparagine 275; that span reads LVSGG. Fe cation is bound at residue aspartate 301.

Belongs to the KAE1 / TsaD family. Fe(2+) serves as cofactor.

The protein resides in the cytoplasm. It carries out the reaction L-threonylcarbamoyladenylate + adenosine(37) in tRNA = N(6)-L-threonylcarbamoyladenosine(37) in tRNA + AMP + H(+). In terms of biological role, required for the formation of a threonylcarbamoyl group on adenosine at position 37 (t(6)A37) in tRNAs that read codons beginning with adenine. Is involved in the transfer of the threonylcarbamoyl moiety of threonylcarbamoyl-AMP (TC-AMP) to the N6 group of A37, together with TsaE and TsaB. TsaD likely plays a direct catalytic role in this reaction. This Streptococcus pyogenes serotype M2 (strain MGAS10270) protein is tRNA N6-adenosine threonylcarbamoyltransferase.